We begin with the raw amino-acid sequence, 185 residues long: Intraflagellar transport protein 22 homolog (185 aa).

GTP-binding positions include 10 to 17, 63 to 67, and 123 to 126; these read GPCESGKT, DCGGD, and HKPG. S137 carries the phosphoserine modification.

The protein belongs to the small GTPase superfamily. Rab family. As to quaternary structure, component of the IFT complex B, at least composed of IFT20, IFT22, IFT25, IFT27, IFT46, IFT52, TRAF3IP1/IFT54, IFT57, IFT74, IFT80, IFT81, and IFT88. Interacts with IFT88. Interacts with CFAP61.

The protein localises to the cell projection. It is found in the cilium. Its function is as follows. Small GTPase-like component of the intraflagellar transport (IFT) complex B. The protein is Intraflagellar transport protein 22 homolog (Ift22) of Mus musculus (Mouse).